The primary structure comprises 1155 residues: Pesticidal crystal protein Cry1Ab (1155 aa).

Belongs to the delta endotoxin family.

In terms of biological role, promotes colloidosmotic lysis by binding to the midgut epithelial cells of many lepidopteran larvae. This is Pesticidal crystal protein Cry1Ab (cry1Ab) from Bacillus thuringiensis subsp. aizawai.